The primary structure comprises 259 residues: Global transcriptional regulator CodY (259 aa).

Positions 1-155 (MSLLSRMRKI…GATVVGMEIL (155 aa)) are GAF domain. Residues 203–222 (ASKIADRVGITRSVIVNALR) constitute a DNA-binding region (H-T-H motif). Ser215 carries the phosphoserine modification.

This sequence belongs to the CodY family.

Its subcellular location is the cytoplasm. In terms of biological role, DNA-binding global transcriptional regulator which is involved in the adaptive response to starvation and acts by directly or indirectly controlling the expression of numerous genes in response to nutrient availability. During rapid exponential growth, CodY is highly active and represses genes whose products allow adaptation to nutrient depletion. The protein is Global transcriptional regulator CodY of Halalkalibacterium halodurans (strain ATCC BAA-125 / DSM 18197 / FERM 7344 / JCM 9153 / C-125) (Bacillus halodurans).